Reading from the N-terminus, the 290-residue chain is MNFQDMTLSLHRFWEEQGCLIVQPYDVEKGAGTMNPHTFLRAIGPEPWNVAYIEPCRRPTDGRYAQNPNRLQHYYQYQVLMKPSPGDIQERYLRSLEVLGIHPEKHDVRFVEDNWESPTLGAWGVGWEVWLDGMEVTQFTYFQQCGGIDCRPVSIEITYGIERLAMYLQGVDSIFDIEWGAGLTYGQVHREGEIENCIYNFEQANPELLFTLFKLYEQEATALSERRLVLPALDYVLKCSHTFNLLDARGVIAVTERTGYIGRIRHLARRIAQAYAKQRESLGFPLLSKT.

Belongs to the class-II aminoacyl-tRNA synthetase family. As to quaternary structure, tetramer of two alpha and two beta subunits.

The protein localises to the cytoplasm. It carries out the reaction tRNA(Gly) + glycine + ATP = glycyl-tRNA(Gly) + AMP + diphosphate. This chain is Glycine--tRNA ligase alpha subunit, found in Gloeobacter violaceus (strain ATCC 29082 / PCC 7421).